Here is a 202-residue protein sequence, read N- to C-terminus: Large ribosomal subunit protein bL25 (202 aa).

This sequence belongs to the bacterial ribosomal protein bL25 family. CTC subfamily. Part of the 50S ribosomal subunit; part of the 5S rRNA/L5/L18/L25 subcomplex. Contacts the 5S rRNA. Binds to the 5S rRNA independently of L5 and L18.

This is one of the proteins that binds to the 5S RNA in the ribosome where it forms part of the central protuberance. In Rickettsia bellii (strain OSU 85-389), this protein is Large ribosomal subunit protein bL25.